Reading from the N-terminus, the 77-residue chain is MKEQKWIHEGLITESLPNGMFRVRLDNEDLILGYVSGKIRRSFIRILPGDRVKIEVSRYDSTRGRIIYRLRNKDSKD.

One can recognise an S1-like domain in the interval 1-71; sequence MKEQKWIHEG…TRGRIIYRLR (71 aa).

The protein belongs to the IF-1 family. As to quaternary structure, component of the 30S ribosomal translation pre-initiation complex which assembles on the 30S ribosome in the order IF-2 and IF-3, IF-1 and N-formylmethionyl-tRNA(fMet); mRNA recruitment can occur at any time during PIC assembly.

It is found in the plastid. The protein resides in the chloroplast. Functionally, one of the essential components for the initiation of protein synthesis. Stabilizes the binding of IF-2 and IF-3 on the 30S subunit to which N-formylmethionyl-tRNA(fMet) subsequently binds. Helps modulate mRNA selection, yielding the 30S pre-initiation complex (PIC). Upon addition of the 50S ribosomal subunit IF-1, IF-2 and IF-3 are released leaving the mature 70S translation initiation complex. This Montinia caryophyllacea (Wild clove bush) protein is Translation initiation factor IF-1, chloroplastic.